Reading from the N-terminus, the 266-residue chain is Putative carbamate hydrolase RutD (266 aa).

It belongs to the AB hydrolase superfamily. Hydrolase RutD family.

The catalysed reaction is carbamate + 2 H(+) = NH4(+) + CO2. Its function is as follows. Involved in pyrimidine catabolism. May facilitate the hydrolysis of carbamate, a reaction that can also occur spontaneously. The protein is Putative carbamate hydrolase RutD of Escherichia coli O157:H7.